The primary structure comprises 546 residues: 2-isopropylmalate synthase (546 aa).

The 264-residue stretch at isoleucine 8–serine 271 folds into the Pyruvate carboxyltransferase domain. Residues aspartate 17, histidine 208, histidine 210, and asparagine 244 each contribute to the Mn(2+) site. Positions glutamine 408–lysine 546 are regulatory domain.

It belongs to the alpha-IPM synthase/homocitrate synthase family. LeuA type 1 subfamily. As to quaternary structure, homodimer. Requires Mn(2+) as cofactor.

It localises to the cytoplasm. It catalyses the reaction 3-methyl-2-oxobutanoate + acetyl-CoA + H2O = (2S)-2-isopropylmalate + CoA + H(+). Its pathway is amino-acid biosynthesis; L-leucine biosynthesis; L-leucine from 3-methyl-2-oxobutanoate: step 1/4. Catalyzes the condensation of the acetyl group of acetyl-CoA with 3-methyl-2-oxobutanoate (2-ketoisovalerate) to form 3-carboxy-3-hydroxy-4-methylpentanoate (2-isopropylmalate). This is 2-isopropylmalate synthase from Prochlorococcus marinus subsp. pastoris (strain CCMP1986 / NIES-2087 / MED4).